Reading from the N-terminus, the 125-residue chain is Small ribosomal subunit protein eS26 (125 aa).

This sequence belongs to the eukaryotic ribosomal protein eS26 family.

This is Small ribosomal subunit protein eS26 (RPS26) from Sterkiella nova (Ciliate).